Here is a 425-residue protein sequence, read N- to C-terminus: Glucose-1-phosphate adenylyltransferase (425 aa).

Alpha-D-glucose 1-phosphate is bound by residues Tyr109, Gly175, 190 to 191 (EK), and Ser208.

This sequence belongs to the bacterial/plant glucose-1-phosphate adenylyltransferase family. Homotetramer.

The enzyme catalyses alpha-D-glucose 1-phosphate + ATP + H(+) = ADP-alpha-D-glucose + diphosphate. It participates in glycan biosynthesis; glycogen biosynthesis. Functionally, involved in the biosynthesis of ADP-glucose, a building block required for the elongation reactions to produce glycogen. Catalyzes the reaction between ATP and alpha-D-glucose 1-phosphate (G1P) to produce pyrophosphate and ADP-Glc. This is Glucose-1-phosphate adenylyltransferase from Saccharophagus degradans (strain 2-40 / ATCC 43961 / DSM 17024).